The following is a 416-amino-acid chain: Enterobactin exporter EntS (416 aa).

The Cytoplasmic segment spans residues 1 to 21 (MNKQSWLLNLSLLKTHPAFRA). Residues 22–42 (VFLARFISIVSLGLLGVAVPV) form a helical membrane-spanning segment. The Periplasmic segment spans residues 43-55 (QIQMMTHSTWQVG). A helical transmembrane segment spans residues 56–76 (LSVTLTGGAMFVGLMVGGVLA). The Cytoplasmic portion of the chain corresponds to 77-83 (DRYERKK). A helical membrane pass occupies residues 84 to 104 (VILLARGTCGIGFIGLCLNAL). Over 105–109 (LPEPS) the chain is Periplasmic. The chain crosses the membrane as a helical span at residues 110-130 (LLAIYLLGLWDGFFASLGVTA). Residues 131–156 (LLAATPALVGRENLMQAGAITMLTVR) lie on the Cytoplasmic side of the membrane. Residues 157 to 177 (LGSVISPMIGGLLLATGGVAW) traverse the membrane as a helical segment. Residue Asn178 is a topological domain, periplasmic. Residues 179 to 199 (YGLAAAGTFITLLPLLSLPAL) traverse the membrane as a helical segment. Residues 200 to 218 (PPPPQPREHPLKSLLAGFR) are Cytoplasmic-facing. Residues 219–239 (FLLASPLVGGIALLGGLLTMA) traverse the membrane as a helical segment. Topologically, residues 240-256 (SAVRVLYPALADNWQMS) are periplasmic. Residues 257–277 (AAQIGFLYAAIPLGAAIGALT) traverse the membrane as a helical segment. Residues 278–287 (SGKLAHSARP) are Cytoplasmic-facing. Residues 288-307 (GLLMLLSTLGSFLAIGLFGL) form a helical membrane-spanning segment. Residues 308-313 (MPMWIL) lie on the Periplasmic side of the membrane. The chain crosses the membrane as a helical span at residues 314–336 (GVVCLALFGWLSAVSSLLQYTML). Residues 337-356 (QTQTPEAMLGRINGLWTAQN) are Cytoplasmic-facing. The chain crosses the membrane as a helical span at residues 357–377 (VTGDAIGAALLGGLGAMMTPV). Residue Ala378 is a topological domain, periplasmic. Residues 379 to 399 (SASASGFGLLIIGVLLLLVLV) traverse the membrane as a helical segment. Residues 400–416 (ELRRFRQTPPQVTASDG) are Cytoplasmic-facing.

It belongs to the major facilitator superfamily. EntS (TC 2.A.1.38) family.

Its subcellular location is the cell inner membrane. Its function is as follows. Component of an export pathway for enterobactin. The chain is Enterobactin exporter EntS from Escherichia coli O157:H7.